A 322-amino-acid chain; its full sequence is Breast cancer metastasis-suppressor 1-like protein (322 aa).

Positions 1 to 16 are enriched in basic and acidic residues; sequence MPVHSREKKESNHNDM. The interval 1–56 is disordered; sequence MPVHSREKKESNHNDMEVDYPENEGSSSEEDDSDSSSGSEEGDSSEMDDEDCERRR. Over residues 17 to 51 the composition is skewed to acidic residues; it reads EVDYPENEGSSSEEDDSDSSSGSEEGDSSEMDDED. 2 coiled-coil regions span residues 50 to 99 and 147 to 178; these read EDCE…QAQE and EKLL…ITSE.

Belongs to the BRMS1 family.

It is found in the nucleus. Its function is as follows. Involved in the histone deacetylase (HDAC1)-dependent transcriptional repression activity. The protein is Breast cancer metastasis-suppressor 1-like protein (brms1l) of Xenopus laevis (African clawed frog).